Consider the following 154-residue polypeptide: Large ribosomal subunit protein uL13 (154 aa).

This sequence belongs to the universal ribosomal protein uL13 family. In terms of assembly, part of the 50S ribosomal subunit.

Its function is as follows. This protein is one of the early assembly proteins of the 50S ribosomal subunit, although it is not seen to bind rRNA by itself. It is important during the early stages of 50S assembly. The polypeptide is Large ribosomal subunit protein uL13 (Rhodopseudomonas palustris (strain ATCC BAA-98 / CGA009)).